The sequence spans 62 residues: UPF0291 protein CLD_1956 (62 aa).

It belongs to the UPF0291 family.

The protein resides in the cytoplasm. The chain is UPF0291 protein CLD_1956 from Clostridium botulinum (strain Okra / Type B1).